The following is a 326-amino-acid chain: Biotin synthase (326 aa).

Positions 50 to 279 (FNGEKVDVEQ…ESVIKISGGR (230 aa)) constitute a Radical SAM core domain. The [4Fe-4S] cluster site is built by Cys68, Cys72, and Cys75. [2Fe-2S] cluster is bound by residues Cys112, Cys145, Cys204, and Lys274.

It belongs to the radical SAM superfamily. Biotin synthase family. As to quaternary structure, homodimer. Requires [4Fe-4S] cluster as cofactor. [2Fe-2S] cluster serves as cofactor.

It catalyses the reaction (4R,5S)-dethiobiotin + (sulfur carrier)-SH + 2 reduced [2Fe-2S]-[ferredoxin] + 2 S-adenosyl-L-methionine = (sulfur carrier)-H + biotin + 2 5'-deoxyadenosine + 2 L-methionine + 2 oxidized [2Fe-2S]-[ferredoxin]. Its pathway is cofactor biosynthesis; biotin biosynthesis; biotin from 7,8-diaminononanoate: step 2/2. Functionally, catalyzes the conversion of dethiobiotin (DTB) to biotin by the insertion of a sulfur atom into dethiobiotin via a radical-based mechanism. This chain is Biotin synthase, found in Nitrosopumilus maritimus (strain SCM1).